Reading from the N-terminus, the 597-residue chain is Fructan 1-exohydrolase w1 (597 aa).

The first 20 residues, 1–20, serve as a signal peptide directing secretion; the sequence is MAQAWAFLLPVLVFGSYVTS. Asp-76 is a catalytic residue. Asn-169, Asn-237, and Asn-249 each carry an N-linked (GlcNAc...) asparagine glycan. Cys-447 and Cys-493 are joined by a disulfide. N-linked (GlcNAc...) asparagine glycosylation occurs at Asn-568.

Belongs to the glycosyl hydrolase 32 family.

The enzyme catalyses Hydrolysis of terminal, non-reducing (2-&gt;1)-linked beta-D-fructofuranose residues in fructans.. With respect to regulation, inhibited by sucrose. In terms of biological role, hydrolyzes inulin-type beta-(2,1)-fructans and beta-(2,1)-linkages in branched fructans. Has low activity against beta-(2,6)-linked fructans. May play a role as a beta-(2,1)-trimmer during graminan biosynthesis. This chain is Fructan 1-exohydrolase w1, found in Triticum aestivum (Wheat).